A 24-amino-acid polypeptide reads, in one-letter code: RuBisCO large subunit-binding protein subunit beta, chloroplastic (24 aa).

This sequence belongs to the chaperonin (HSP60) family. Oligomer of probably six alpha and six beta subunits.

Its subcellular location is the plastid. It localises to the chloroplast. In terms of biological role, this protein binds RuBisCO small and large subunits and is implicated in the assembly of the enzyme oligomer. This chain is RuBisCO large subunit-binding protein subunit beta, chloroplastic, found in Populus euphratica (Euphrates poplar).